Reading from the N-terminus, the 429-residue chain is Enolase (429 aa).

Gln-163 lines the (2R)-2-phosphoglycerate pocket. Glu-205 functions as the Proton donor in the catalytic mechanism. Mg(2+) is bound by residues Asp-242, Glu-285, and Asp-312. Residues Lys-337, Arg-366, Ser-367, and Lys-388 each contribute to the (2R)-2-phosphoglycerate site. Lys-337 serves as the catalytic Proton acceptor.

It belongs to the enolase family. In terms of assembly, component of the RNA degradosome, a multiprotein complex involved in RNA processing and mRNA degradation. Mg(2+) is required as a cofactor.

It is found in the cytoplasm. Its subcellular location is the secreted. The protein resides in the cell surface. The catalysed reaction is (2R)-2-phosphoglycerate = phosphoenolpyruvate + H2O. The protein operates within carbohydrate degradation; glycolysis; pyruvate from D-glyceraldehyde 3-phosphate: step 4/5. Catalyzes the reversible conversion of 2-phosphoglycerate (2-PG) into phosphoenolpyruvate (PEP). It is essential for the degradation of carbohydrates via glycolysis. This Alkalilimnicola ehrlichii (strain ATCC BAA-1101 / DSM 17681 / MLHE-1) protein is Enolase.